The following is a 466-amino-acid chain: 3-isopropylmalate dehydratase large subunit (466 aa).

Cys-347, Cys-407, and Cys-410 together coordinate [4Fe-4S] cluster.

This sequence belongs to the aconitase/IPM isomerase family. LeuC type 1 subfamily. As to quaternary structure, heterodimer of LeuC and LeuD. Requires [4Fe-4S] cluster as cofactor.

It carries out the reaction (2R,3S)-3-isopropylmalate = (2S)-2-isopropylmalate. It functions in the pathway amino-acid biosynthesis; L-leucine biosynthesis; L-leucine from 3-methyl-2-oxobutanoate: step 2/4. Its function is as follows. Catalyzes the isomerization between 2-isopropylmalate and 3-isopropylmalate, via the formation of 2-isopropylmaleate. The chain is 3-isopropylmalate dehydratase large subunit from Blochmanniella pennsylvanica (strain BPEN).